A 147-amino-acid chain; its full sequence is UPF0178 protein Tgr7_2584 (147 aa).

The protein belongs to the UPF0178 family.

In Thioalkalivibrio sulfidiphilus (strain HL-EbGR7), this protein is UPF0178 protein Tgr7_2584.